Consider the following 163-residue polypeptide: Phosphopantetheine adenylyltransferase (163 aa).

T9 provides a ligand contact to substrate. Residues T9–F10 and H17 each bind ATP. Residues K41, L76, and R90 each contribute to the substrate site. ATP-binding positions include G91 to R93, E101, and H126 to R132.

The protein belongs to the bacterial CoaD family. In terms of assembly, homohexamer. The cofactor is Mg(2+).

The protein localises to the cytoplasm. It catalyses the reaction (R)-4'-phosphopantetheine + ATP + H(+) = 3'-dephospho-CoA + diphosphate. It functions in the pathway cofactor biosynthesis; coenzyme A biosynthesis; CoA from (R)-pantothenate: step 4/5. In terms of biological role, reversibly transfers an adenylyl group from ATP to 4'-phosphopantetheine, yielding dephospho-CoA (dPCoA) and pyrophosphate. This chain is Phosphopantetheine adenylyltransferase, found in Caulobacter vibrioides (strain ATCC 19089 / CIP 103742 / CB 15) (Caulobacter crescentus).